The following is a 254-amino-acid chain: Serine acetyltransferase (254 aa).

It belongs to the transferase hexapeptide repeat family.

The protein resides in the cytoplasm. The enzyme catalyses L-serine + acetyl-CoA = O-acetyl-L-serine + CoA. The protein operates within amino-acid biosynthesis; L-cysteine biosynthesis; L-cysteine from L-serine: step 1/2. The chain is Serine acetyltransferase (cysE) from Buchnera aphidicola subsp. Baizongia pistaciae (strain Bp).